A 469-amino-acid polypeptide reads, in one-letter code: Argininosuccinate lyase (469 aa).

This sequence belongs to the lyase 1 family. Argininosuccinate lyase subfamily.

The protein localises to the cytoplasm. It carries out the reaction 2-(N(omega)-L-arginino)succinate = fumarate + L-arginine. Its pathway is amino-acid biosynthesis; L-arginine biosynthesis; L-arginine from L-ornithine and carbamoyl phosphate: step 3/3. The polypeptide is Argininosuccinate lyase (Saccharophagus degradans (strain 2-40 / ATCC 43961 / DSM 17024)).